Reading from the N-terminus, the 705-residue chain is uncharacterized protein (705 aa).

A DNA-binding region (zn(2)-C6 fungal-type) is located at residues Cys-24–Cys-52.

It localises to the nucleus. This is an uncharacterized protein from Saccharomyces cerevisiae (strain ATCC 204508 / S288c) (Baker's yeast).